The primary structure comprises 92 residues: Nodulation protein F (92 aa).

Residues 4-88 (QLTLEIISAI…DVVEAVRGLL (85 aa)) form the Carrier domain. Ser-45 is subject to O-(pantetheine 4'-phosphoryl)serine.

In terms of processing, 4'-phosphopantetheine is transferred from CoA to a specific serine of apo-NodF.

Proposed to synthesize nod factor fatty acyl chain. Involved in trans-2,trans-4,trans-6,cis-11-octadecatetraenoic acid biosynthesis. This is Nodulation protein F (nodF) from Rhizobium leguminosarum bv. viciae.